The following is a 241-amino-acid chain: Adenylate kinase 3 (241 aa).

38-43 (GCGKGT) serves as a coordination point for ATP. Positions 58–87 (ATGDMLRAAVAAKTPLGIKAKEAMDKGELV) are NMP. Residues Thr-59, Arg-64, 85-87 (ELV), 113-116 (GFPR), and Gln-120 contribute to the AMP site. The tract at residues 154–191 (GRWIHPSSGRSYHTKFAPPKTPGLDDVTGEPLIQRKDD) is LID. An ATP-binding site is contributed by Arg-155. Arg-188 and Arg-199 together coordinate AMP.

It belongs to the adenylate kinase family.

The protein localises to the cytoplasm. It carries out the reaction AMP + ATP = 2 ADP. Functionally, catalyzes the reversible transfer of the terminal phosphate group between ATP and AMP. Plays an important role in cellular energy homeostasis and in adenine nucleotide metabolism. In Oryza sativa subsp. japonica (Rice), this protein is Adenylate kinase 3 (ADK-A).